The primary structure comprises 532 residues: Probable bifunctional tRNA threonylcarbamoyladenosine biosynthesis protein (532 aa).

The interval 1-323 is kae1; that stretch reads MRVLGVEGTA…FRPDEVSVTW (323 aa). 2 residues coordinate Fe cation: His107 and His111. L-threonylcarbamoyladenylate contacts are provided by residues 128 to 132, Asp160, Gly173, Glu177, and Asn256; that span reads NASGA. Position 284 (Asp284) interacts with Fe cation. The Protein kinase domain maps to 329-532; it reads PARDPGADAV…GRYQDDPETA (204 aa). ATP contacts are provided by residues 338 to 346 and Lys355; that span reads VRQGAEATV. The Proton acceptor; for kinase activity role is filled by Asp444.

This sequence in the N-terminal section; belongs to the KAE1 / TsaD family. It in the C-terminal section; belongs to the protein kinase superfamily. Tyr protein kinase family. BUD32 subfamily. In terms of assembly, component of the KEOPS complex that consists of Kae1, Bud32, Cgi121 and Pcc1; the whole complex dimerizes. Fe(2+) serves as cofactor.

The protein localises to the cytoplasm. It catalyses the reaction L-seryl-[protein] + ATP = O-phospho-L-seryl-[protein] + ADP + H(+). The enzyme catalyses L-threonyl-[protein] + ATP = O-phospho-L-threonyl-[protein] + ADP + H(+). The catalysed reaction is L-threonylcarbamoyladenylate + adenosine(37) in tRNA = N(6)-L-threonylcarbamoyladenosine(37) in tRNA + AMP + H(+). Functionally, required for the formation of a threonylcarbamoyl group on adenosine at position 37 (t(6)A37) in tRNAs that read codons beginning with adenine. Is a component of the KEOPS complex that is probably involved in the transfer of the threonylcarbamoyl moiety of threonylcarbamoyl-AMP (TC-AMP) to the N6 group of A37. The Kae1 domain likely plays a direct catalytic role in this reaction. The Bud32 domain probably displays kinase activity that regulates Kae1 function. This is Probable bifunctional tRNA threonylcarbamoyladenosine biosynthesis protein from Halobacterium salinarum (strain ATCC 700922 / JCM 11081 / NRC-1) (Halobacterium halobium).